Consider the following 951-residue polypeptide: Sodium/potassium exporting P-type ATPase 1 (951 aa).

Residues 1-57 (MMGANSTEWHGQSVEQVTELLGTDVERGLKESVVGQLQKQFGPNELKGQRGVNPWKV) lie on the Cytoplasmic side of the membrane. A helical membrane pass occupies residues 58–78 (LLAQFTNGLTVILLIATVVSF). The Extracellular portion of the chain corresponds to 79–82 (AVQD). The helical transmembrane segment at 83-103 (HAEGGVLAFVIIFNASVGFVQ) threads the bilayer. At 104–247 (EYRAEKTMDA…TPMQKRLNRM (144 aa)) the chain is on the cytoplasmic side. A helical membrane pass occupies residues 248-268 (AYILFGISLVLAVIVFAVNKF). Residues 269 to 273 (EFNTD) lie on the Extracellular side of the membrane. Residues 274–294 (IIIYAVSLGIAVIPEGLIAVI) traverse the membrane as a helical segment. Residues 295–717 (TIVMALGVRR…GRRIFSNIRK (423 aa)) lie on the Cytoplasmic side of the membrane. Asp-330 acts as the 4-aspartylphosphate intermediate in catalysis. Positions 330 and 332 each coordinate Mg(2+). Residues Thr-332, Glu-414, Lys-467, Arg-511, Thr-575, Gly-576, Asp-577, Arg-636, and Lys-642 each coordinate ATP. Asp-661 contacts Mg(2+). Asn-664 lines the ATP pocket. A helical transmembrane segment spans residues 718-738 (FILHLVSTNVGEVIVLIIGLA). Topologically, residues 739 to 743 (FKDRN) are extracellular. The chain crosses the membrane as a helical span at residues 744 to 764 (GVSVFPLAPVQILFMNMVTST). Residues 765–799 (PPAMALGVEAASKDTMKVPPHTKGLFGKEVLADMM) are Cytoplasmic-facing. A helical membrane pass occupies residues 800-820 (VYGIIMGSLILVDWVLVIYAF). Topologically, residues 821 to 840 (GDSQLGLECNSDRMLNECNT) are extracellular. A helical membrane pass occupies residues 841–861 (VFRARSTIMVALIWMLLLHAY). The Cytoplasmic portion of the chain corresponds to 862-885 (NCRHPRASLFTAEGGGASKLFSNR). The helical transmembrane segment at 886 to 906 (LLVWSVLLGSLMPIPTVYIPT) threads the bilayer. The Extracellular segment spans residues 907–916 (LNTKIFKQET). Residues 917 to 937 (ISWEWSIVVVSVVAFFFLSEL) form a helical membrane-spanning segment. Over 938-951 (YKLIKRNVMTSRVI) the chain is Cytoplasmic.

Belongs to the cation transport ATPase (P-type) (TC 3.A.3) family. Type IID subfamily. It depends on Mg(2+) as a cofactor. The active site is phosphorylated in presence of sodium or potassium and in conditions of higher pH. Not phosphorylated in presence of calcium ions.

The protein resides in the cell membrane. It carries out the reaction Na(+)(in) + ATP + H2O = Na(+)(out) + ADP + phosphate + H(+). The catalysed reaction is K(+)(in) + ATP + H2O = K(+)(out) + ADP + phosphate + H(+). In terms of biological role, catalyzes the hydrolysis of ATP coupled with the export of sodium and potassium from the cell. Appears to export potassium more efficiently than sodium. May transport other cations such as lithium. Sodium/potassium efflux ATPases are involved in salt tolerance and maintaining the membrane potential across the plasma membrane in high salinity (Na+) or alkaline (K+) environments. In Marchantia polymorpha (Common liverwort), this protein is Sodium/potassium exporting P-type ATPase 1.